The sequence spans 301 residues: Protoheme IX farnesyltransferase (301 aa).

A run of 9 helical transmembrane segments spans residues 20–42 (FTELVKIGIVNSNTITAFTGMWL), 55–75 (VDVIFFTIVGSALIVAASGAF), 105–125 (ALMVALVLGVVGTIMLFMTTW), 126–146 (QAGVLGVIGVFLYVVVYSLYA), 150–172 (LVSNTVIGSFSGAVPPLIGWFAV), 176–198 (FSMVPIMLFLVMFCWQPPHFYAI), 227–247 (MFFWVILLTILPFFMFDLGIV), 249–269 (VILATLLNIGWLALSVYGFKM), and 280–300 (FIYSLNYMTILFVAMVVISIF).

Belongs to the UbiA prenyltransferase family. Protoheme IX farnesyltransferase subfamily. As to quaternary structure, interacts with CtaA.

It is found in the cell membrane. It catalyses the reaction heme b + (2E,6E)-farnesyl diphosphate + H2O = Fe(II)-heme o + diphosphate. It participates in porphyrin-containing compound metabolism; heme O biosynthesis; heme O from protoheme: step 1/1. In terms of biological role, converts heme B (protoheme IX) to heme O by substitution of the vinyl group on carbon 2 of heme B porphyrin ring with a hydroxyethyl farnesyl side group. This Listeria welshimeri serovar 6b (strain ATCC 35897 / DSM 20650 / CCUG 15529 / CIP 8149 / NCTC 11857 / SLCC 5334 / V8) protein is Protoheme IX farnesyltransferase.